Consider the following 946-residue polypeptide: Zinc finger CCCH-type antiviral protein 1 (946 aa).

An N-terminal domain region spans residues methionine 1–histidine 254. The Nuclear localization signal signature appears at arginine 69–lysine 76. C3H1-type zinc fingers lie at residues cysteine 73 to histidine 86, leucine 87 to leucine 113, cysteine 150 to histidine 172, and isoleucine 173 to methionine 194. Disordered stretches follow at residues asparagine 221–leucine 283 and arginine 302–phenylalanine 354. The binding to EXOSC5 stretch occupies residues threonine 224–histidine 254. The segment covering alanine 242 to serine 257 has biased composition (basic and acidic residues). Serine 257 is subject to Phosphoserine. Serine 262 is modified (phosphoserine; by GSK3-beta). Phosphoserine occurs at positions 265, 269, and 273. Threonine 277 carries the phosphothreonine modification. A Nuclear export signal motif is present at residues leucine 283–valine 290. 2 positions are modified to phosphoserine: serine 324 and serine 350. Residues lysine 412–arginine 413 carry the Nuclear localization signal motif. Serine 425 carries the phosphoserine modification. A disordered region spans residues asparagine 461–proline 491. Over residues glycine 466–serine 477 the composition is skewed to polar residues. Position 508 is a phosphotyrosine (tyrosine 508). The disordered stretch occupies residues glycine 523–serine 570. Residues glutamate 524–asparagine 533 show a composition bias toward polar residues. Serine 553 carries the post-translational modification Phosphoserine. Residues proline 554 to serine 567 are compositionally biased toward polar residues. Serine 583 and serine 680 each carry phosphoserine. One can recognise a WWE domain in the interval phenylalanine 684–arginine 771. The PARP catalytic domain maps to serine 805 to lysine 946.

Belongs to the ARTD/PARP family. Homodimer or homooligomer. Homooligomerization is essential for its antiviral activity. Interacts with EXOSC5. Interacts (via N-terminal domain) with DDX17 in an RNA-independent manner. Interacts with EXOSC3, EXOSC7, DCP2 and DCP1A. Interacts with PARN in an RNA-independent manner. Interacts with XRN1 in an RNA-dependent manner. Interacts (via N-terminal domain) with DHX30 (via N-terminus) in an RNA-independent manner. Isoform 2 interacts (via zinc-fingers) with RIGI in an RNA-dependent manner. Post-translationally, phosphorylation at Ser-273 is essential for sequential phosphorylation of Ser-269, Ser-265, Ser-262 and Ser-257 by GSK3-beta. Phosphorylation by GSK3-beta enhances its antiviral activity.

Its subcellular location is the cytoplasm. The protein localises to the nucleus. Its function is as follows. Antiviral protein which inhibits the replication of viruses by recruiting the cellular RNA degradation machineries to degrade the viral mRNAs. Binds to a ZAP-responsive element (ZRE) present in the target viral mRNA, recruits cellular poly(A)-specific ribonuclease PARN to remove the poly(A) tail, and the 3'-5' exoribonuclease complex exosome to degrade the RNA body from the 3'-end. It also recruits the decapping complex DCP1-DCP2 through RNA helicase p72 (DDX17) to remove the cap structure of the viral mRNA to initiate its degradation from the 5'-end. Its target viruses belong to families which include retroviridae: human immunodeficiency virus type 1 (HIV-1) and moloney and murine leukemia virus (MoMLV), filoviridae: ebola virus (EBOV) and marburg virus (MARV), togaviridae: sindbis virus (SINV) and Ross river virus (RRV). Specifically targets the multiply spliced but not unspliced or singly spliced HIV-1 mRNAs for degradation. Isoform 1 is a more potent viral inhibitor than isoform 2. Isoform 2 acts as a positive regulator of RIG-I signaling resulting in activation of the downstream effector IRF3 leading to the expression of type I IFNs and IFN stimulated genes (ISGs). The sequence is that of Zinc finger CCCH-type antiviral protein 1 (Zc3hav1) from Mus musculus (Mouse).